We begin with the raw amino-acid sequence, 730 residues long: Guanyl-specific ribonuclease pgl-1 (730 aa).

Positions 205–447 (KQLMLDGPKS…VTRIVESLEK (243 aa)) are involved in dimerization. The active-site Proton acceptor is the His437. 2 stretches are compositionally biased toward polar residues: residues 452 to 472 (DTPS…QDSA) and 568 to 595 (DANQ…SPTK). Disordered stretches follow at residues 452–475 (DTPS…AYTK), 567–639 (SDAN…TPMP), and 686–730 (GGRG…RGGF). Residues 674-730 (GGGRGGYGGGDRGGRGGYGGDRGGRGGYGGGDRGGRGGYGGDRGRGGYGGRGGRGGF) form an RNA-binding RGG-box region.

In terms of assembly, homodimer. Interacts with pgl-2 and pgl-3; this association is not required for P-granule localization of either pgl-2 or pgl-3. Interacts with ife-1. Interacts with prmt-1; the interaction is direct. Interacts with nmad-1. Interacts with P granule components meg-1, meg-3 and meg-4. Does not require metal ions for catalytic activity. is required as a cofactor. Post-translationally, methylated at arginine residues in the RNA-binding RGG-box by prmt-1. Methylation promotes P-granule degradation by autophagy. Expressed in the germline. Expressed in most somatic cells.

The protein localises to the cytoplasmic granule. It catalyses the reaction [RNA] containing guanosine + H2O = an [RNA fragment]-3'-guanosine-3'-phosphate + a 5'-hydroxy-ribonucleotide-3'-[RNA fragment].. Not inhibited by RNase inhibitor RNasin. Guanyl-specific endoribonuclease which cleaves the phosphodiester bond in single-stranded RNA between the 3'-guanylic residue and the 5'-OH residue of adjacent nucleotide, resulting in the formation of a corresponding 2',3'-cyclic phosphate intermediate. Together with the P-granule component pgl-3, is involved in the formation of P-granules. Together with pgl-3, probably recruits other granule components such as pos-1, mex-3 and glh-1 to P-granules. In addition, may act redundantly with pgl-3 to protect germ cells from excessive germline apoptosis during normal oogenesis and development of the two gonadal arms. This may in part be through regulating the localization of sir-2.1 which is involved in germ cell apoptosis. May protect somatic cells from excessive apoptosis during normal development. Essential role in male and female postembryonic germline development; maternally provided protein maintains a population of proliferating germ cells and zygotic expression is required for correct oogenesis. In Caenorhabditis elegans, this protein is Guanyl-specific ribonuclease pgl-1.